The sequence spans 206 residues: Putative precorrin-2 dehydrogenase (206 aa).

NAD(+)-binding positions include 20-21 (SV) and 41-46 (KEFDEE).

It belongs to the precorrin-2 dehydrogenase / sirohydrochlorin ferrochelatase family. As to quaternary structure, homodimer.

The catalysed reaction is precorrin-2 + NAD(+) = sirohydrochlorin + NADH + 2 H(+). It participates in porphyrin-containing compound metabolism; siroheme biosynthesis; sirohydrochlorin from precorrin-2: step 1/1. Functionally, involved in the archaeal biosynthesis of heme. Catalyzes the oxiation of precorrin-2 into sirohydroclorin. This chain is Putative precorrin-2 dehydrogenase, found in Methanocaldococcus jannaschii (strain ATCC 43067 / DSM 2661 / JAL-1 / JCM 10045 / NBRC 100440) (Methanococcus jannaschii).